The following is a 127-amino-acid chain: Large ribosomal subunit protein uL22 (127 aa).

As to quaternary structure, part of the 50S ribosomal subunit.

Functionally, this protein binds specifically to 23S rRNA; its binding is stimulated by other ribosomal proteins, e.g. L4, L17, and L20. It is important during the early stages of 50S assembly. It makes multiple contacts with different domains of the 23S rRNA in the assembled 50S subunit and ribosome. Its function is as follows. The globular domain of the protein is located near the polypeptide exit tunnel on the outside of the subunit, while an extended beta-hairpin is found that lines the wall of the exit tunnel in the center of the 70S ribosome. The protein is Large ribosomal subunit protein uL22 of Rhodopseudomonas palustris (strain ATCC BAA-98 / CGA009).